Here is a 502-residue protein sequence, read N- to C-terminus: MTPTHPTVTELLLPLSEIDDRGVYFEDSFTSWRDHIRHGAAIAAALRERLDPARPPHVGVLLQNTPFFSATLVAGALSGIVPVGLNPVRRGAALAGDIAKADCQLVLTGSGSAEVPADVEHINVDSPEWTDEVAAHRDTEVRFRSADLADLFMLIFTSGTSGDPKAVKCSHRKVAIAGVTITQRFSLGRDDVCYVSMPLFHSNAVLVGWAVAAACQGSMALRRKFSASQFLADVRRYGATYANYVGKPLSYVLATPELPDDADNPLRAVYGNEGVPGDIDRFGRRFGCVVMDGFGSTEGGVAITRTLDTPAGALGPLPGGIQIVDPDTGEPCPTGVVGELVNTAGPGGFEGYYNDEAAEAERMAGGVYHSGDLAYRDDAGYAYFAGRLGDWMRVDGENLGTAPIERVLMRYPDATEVAVYPVPDPVVGDQVMAALVLAPGTKFDADKFRAFLTEQPDLGHKQWPSYVRVSAGLPRTMTFKVIKRQLSAEGVACADPVWPIRR.

Belongs to the ATP-dependent AMP-binding enzyme family.

The catalysed reaction is a medium-chain fatty acid + ATP + CoA = a medium-chain fatty acyl-CoA + AMP + diphosphate. It carries out the reaction a long-chain fatty acid + ATP + CoA = a long-chain fatty acyl-CoA + AMP + diphosphate. It functions in the pathway lipid metabolism; fatty acid biosynthesis. Catalyzes the activation of medium/long-chain fatty acids as acyl-coenzyme A (acyl-CoA), which are then transferred to the multifunctional polyketide synthase (PKS) type III for further chain extension. The chain is Medium/long-chain-fatty-acid--CoA ligase FadD17 (fadD17) from Mycobacterium bovis (strain ATCC BAA-935 / AF2122/97).